Consider the following 111-residue polypeptide: Probable 4-amino-4-deoxy-L-arabinose-phosphoundecaprenol flippase subunit ArnE (111 aa).

3 consecutive transmembrane segments (helical) span residues 38–58, 61–81, and 91–111; these read LWLG…LLVL, LPVG…TLAA, and PRHW…GSAA. The EamA domain maps to 40–109; it reads LGLALICMGA…IISGIIILGS (70 aa).

It belongs to the ArnE family. As to quaternary structure, heterodimer of ArnE and ArnF.

It is found in the cell inner membrane. It participates in bacterial outer membrane biogenesis; lipopolysaccharide biosynthesis. Functionally, translocates 4-amino-4-deoxy-L-arabinose-phosphoundecaprenol (alpha-L-Ara4N-phosphoundecaprenol) from the cytoplasmic to the periplasmic side of the inner membrane. The sequence is that of Probable 4-amino-4-deoxy-L-arabinose-phosphoundecaprenol flippase subunit ArnE from Salmonella paratyphi B (strain ATCC BAA-1250 / SPB7).